We begin with the raw amino-acid sequence, 190 residues long: Potassium-transporting ATPase KdpC subunit (190 aa).

Residues 13 to 33 (VGFLLLTLMCGVVYPGIVTIF) form a helical membrane-spanning segment.

This sequence belongs to the KdpC family. In terms of assembly, the system is composed of three essential subunits: KdpA, KdpB and KdpC.

The protein resides in the cell membrane. Functionally, part of the high-affinity ATP-driven potassium transport (or Kdp) system, which catalyzes the hydrolysis of ATP coupled with the electrogenic transport of potassium into the cytoplasm. This subunit acts as a catalytic chaperone that increases the ATP-binding affinity of the ATP-hydrolyzing subunit KdpB by the formation of a transient KdpB/KdpC/ATP ternary complex. The protein is Potassium-transporting ATPase KdpC subunit of Listeria monocytogenes serotype 4a (strain HCC23).